A 46-amino-acid chain; its full sequence is Esculentin-1HSa (46 aa).

Cys40 and Cys46 are oxidised to a cystine.

In terms of tissue distribution, expressed by the skin glands.

The protein resides in the secreted. In terms of biological role, has antibacterial activity against the Gram-positive bacterium S.aureus ATCC 25923 (MIC=12 uM) and the Gram-negative bacterium E.coli ATCC 25726 (MIC=12 uM). This chain is Esculentin-1HSa, found in Odorrana hosii (Hose's rock frog).